Here is a 253-residue protein sequence, read N- to C-terminus: Ribosomal RNA small subunit methyltransferase A (253 aa).

The S-adenosyl-L-methionine site is built by histidine 12, leucine 14, glycine 39, glutamate 60, aspartate 81, and asparagine 104.

It belongs to the class I-like SAM-binding methyltransferase superfamily. rRNA adenine N(6)-methyltransferase family. RsmA subfamily.

It localises to the cytoplasm. The enzyme catalyses adenosine(1518)/adenosine(1519) in 16S rRNA + 4 S-adenosyl-L-methionine = N(6)-dimethyladenosine(1518)/N(6)-dimethyladenosine(1519) in 16S rRNA + 4 S-adenosyl-L-homocysteine + 4 H(+). Functionally, specifically dimethylates two adjacent adenosines (A1518 and A1519) in the loop of a conserved hairpin near the 3'-end of 16S rRNA in the 30S particle. May play a critical role in biogenesis of 30S subunits. The sequence is that of Ribosomal RNA small subunit methyltransferase A from Acidovorax ebreus (strain TPSY) (Diaphorobacter sp. (strain TPSY)).